A 405-amino-acid polypeptide reads, in one-letter code: Cysteine desulfurase IscS (405 aa).

Asn156 is a pyridoxal 5'-phosphate binding site. At Lys207 the chain carries N6-(pyridoxal phosphate)lysine. Residue Cys329 is the Cysteine persulfide intermediate of the active site. [2Fe-2S] cluster is bound at residue Cys329.

Belongs to the class-V pyridoxal-phosphate-dependent aminotransferase family. NifS/IscS subfamily. Homodimer. Forms a heterotetramer with IscU, interacts with other sulfur acceptors. It depends on pyridoxal 5'-phosphate as a cofactor.

The protein localises to the cytoplasm. The enzyme catalyses (sulfur carrier)-H + L-cysteine = (sulfur carrier)-SH + L-alanine. Its pathway is cofactor biosynthesis; iron-sulfur cluster biosynthesis. In terms of biological role, master enzyme that delivers sulfur to a number of partners involved in Fe-S cluster assembly, tRNA modification or cofactor biosynthesis. Catalyzes the removal of elemental sulfur atoms from cysteine to produce alanine. Functions as a sulfur delivery protein for Fe-S cluster synthesis onto IscU, an Fe-S scaffold assembly protein, as well as other S acceptor proteins. In Dechloromonas aromatica (strain RCB), this protein is Cysteine desulfurase IscS.